The following is a 70-amino-acid chain: Alpha-elapitoxin-Ast2a (70 aa).

5 disulfides stabilise this stretch: C3-C20, C13-C41, C26-C30, C45-C56, and C57-C62. The residue at position 70 (S70) is a Serine amide.

This sequence belongs to the three-finger toxin family. Long-chain subfamily. Type II alpha-neurotoxin sub-subfamily. As to expression, expressed by the venom gland.

The protein resides in the secreted. In terms of biological role, binds with high affinity to muscular (alpha-1/CHRNA1) and neuronal (alpha-7/CHRNA7) nicotinic acetylcholine receptor (nAChR) and inhibits acetylcholine from binding to the receptor, thereby impairing neuromuscular and neuronal transmission. The chain is Alpha-elapitoxin-Ast2a from Hydrophis stokesii (Stokes's sea snake).